The primary structure comprises 177 residues: N5-carboxyaminoimidazole ribonucleotide mutase (177 aa).

Substrate contacts are provided by Ser18, Asp21, and Arg48.

It belongs to the AIR carboxylase family. Class I subfamily.

It catalyses the reaction 5-carboxyamino-1-(5-phospho-D-ribosyl)imidazole + H(+) = 5-amino-1-(5-phospho-D-ribosyl)imidazole-4-carboxylate. It functions in the pathway purine metabolism; IMP biosynthesis via de novo pathway; 5-amino-1-(5-phospho-D-ribosyl)imidazole-4-carboxylate from 5-amino-1-(5-phospho-D-ribosyl)imidazole (N5-CAIR route): step 2/2. In terms of biological role, catalyzes the conversion of N5-carboxyaminoimidazole ribonucleotide (N5-CAIR) to 4-carboxy-5-aminoimidazole ribonucleotide (CAIR). This is N5-carboxyaminoimidazole ribonucleotide mutase from Pyrococcus horikoshii (strain ATCC 700860 / DSM 12428 / JCM 9974 / NBRC 100139 / OT-3).